The sequence spans 229 residues: tRNA (guanosine(18)-2'-O)-methyltransferase (229 aa).

Positions 96, 139, and 148 each coordinate S-adenosyl-L-methionine.

The protein belongs to the class IV-like SAM-binding methyltransferase superfamily. RNA methyltransferase TrmH family.

The enzyme catalyses guanosine(18) in tRNA + S-adenosyl-L-methionine = 2'-O-methylguanosine(18) in tRNA + S-adenosyl-L-homocysteine + H(+). Functionally, catalyzes the 2'-O methylation of guanosine at position 18 in tRNA. The protein is tRNA (guanosine(18)-2'-O)-methyltransferase of Escherichia coli O157:H7.